The following is a 338-amino-acid chain: Bifunctional methylenetetrahydrofolate dehydrogenase/cyclohydrolase 2, mitochondrial (338 aa).

Residues 89 to 93 (YVRNK) and 136 to 138 (VQL) contribute to the substrate site. NAD(+) is bound by residues 205–207 (GRS) and arginine 238. Position 314–318 (314–318 (PGGVG)) interacts with substrate.

Belongs to the tetrahydrofolate dehydrogenase/cyclohydrolase family. It depends on Mg(2+) as a cofactor. In terms of tissue distribution, widely expressed.

The protein localises to the mitochondrion inner membrane. It catalyses the reaction (6R)-5,10-methylene-5,6,7,8-tetrahydrofolate + NAD(+) = (6R)-5,10-methenyltetrahydrofolate + NADH. The enzyme catalyses (6R)-5,10-methenyltetrahydrofolate + H2O = (6R)-10-formyltetrahydrofolate + H(+). The catalysed reaction is (6R)-5,10-methylene-5,6,7,8-tetrahydrofolate + NADP(+) = (6R)-5,10-methenyltetrahydrofolate + NADPH. It functions in the pathway one-carbon metabolism; tetrahydrofolate interconversion. Its function is as follows. Bifunctional mitochondrial folate-interconverting enzyme that has both NAD/NADP-dependent methylenetetrahydrofolate dehydrogenase and methenyltetrahydrofolate cyclohydrolase activities. This chain is Bifunctional methylenetetrahydrofolate dehydrogenase/cyclohydrolase 2, mitochondrial, found in Mus musculus (Mouse).